The chain runs to 230 residues: Protein CbbY (230 aa).

Aspartate 8 (nucleophile) is an active-site residue. 2 residues coordinate Mg(2+): aspartate 8 and aspartate 10. Substrate is bound at residue aspartate 8. The Proton donor role is filled by aspartate 10. Residues glutamate 17, 50–54 (GGKER), 75–78 (HRAK), and 115–121 (TTTSLPN) each bind substrate. Aspartate 176 is a Mg(2+) binding site.

It belongs to the HAD-like hydrolase superfamily. CbbY/CbbZ/Gph/YieH family. Mg(2+) is required as a cofactor.

It catalyses the reaction D-xylulose 1,5-bisphosphate + H2O = D-xylulose 5-phosphate + phosphate. Functionally, highly selective xylulose-1,5-bisphosphate (XuBP) phosphatase. Also shows activity towards ribulose-1,5-bisphosphate (RuBP) and fructose-1,6-bisphosphate (FBP), but not towards fructose-6-phosphate (F6P) or ribulose-5-phosphate (Ru5P). Degrades xylulose-1,5-bisphosphate, a potent inhibitor of rubisco produced by the rubisco itself. The protein is Protein CbbY of Cereibacter sphaeroides (Rhodobacter sphaeroides).